Consider the following 66-residue polypeptide: Large ribosomal subunit protein bL35 (66 aa).

The protein belongs to the bacterial ribosomal protein bL35 family.

This is Large ribosomal subunit protein bL35 from Acholeplasma laidlawii (strain PG-8A).